We begin with the raw amino-acid sequence, 155 residues long: Large ribosomal subunit protein uL22 (155 aa).

Belongs to the universal ribosomal protein uL22 family. As to quaternary structure, part of the 50S ribosomal subunit.

This protein binds specifically to 23S rRNA. It makes multiple contacts with different domains of the 23S rRNA in the assembled 50S subunit and ribosome. Functionally, the globular domain of the protein is located near the polypeptide exit tunnel on the outside of the subunit, while an extended beta-hairpin is found that lines the wall of the exit tunnel in the center of the 70S ribosome. The protein is Large ribosomal subunit protein uL22 of Pyrococcus furiosus (strain ATCC 43587 / DSM 3638 / JCM 8422 / Vc1).